The following is a 143-amino-acid chain: Transcription antitermination protein NusB (143 aa).

Belongs to the NusB family.

Involved in transcription antitermination. Required for transcription of ribosomal RNA (rRNA) genes. Binds specifically to the boxA antiterminator sequence of the ribosomal RNA (rrn) operons. The protein is Transcription antitermination protein NusB of Dehalococcoides mccartyi (strain ATCC BAA-2266 / KCTC 15142 / 195) (Dehalococcoides ethenogenes (strain 195)).